The following is a 187-amino-acid chain: Ribosome-recycling factor (187 aa).

The protein belongs to the RRF family.

It is found in the cytoplasm. Responsible for the release of ribosomes from messenger RNA at the termination of protein biosynthesis. May increase the efficiency of translation by recycling ribosomes from one round of translation to another. The chain is Ribosome-recycling factor from Methylobacterium nodulans (strain LMG 21967 / CNCM I-2342 / ORS 2060).